The chain runs to 178 residues: uncharacterized protein (178 aa).

This is an uncharacterized protein from Sulfolobus islandicus filamentous virus (isolate Iceland/Hveragerdi) (SIFV).